The chain runs to 6061 residues: Intermembrane lipid transfer protein vps13B (6061 aa).

Residues 2–115 form the Chorein N-terminal domain; that stretch reads FESLVADIIA…QLELKRKKLE (114 aa). Disordered regions lie at residues 590 to 623, 803 to 828, 1386 to 1414, 1604 to 1644, 2747 to 2784, 2950 to 2972, 3364 to 3401, 3855 to 3876, 4011 to 4068, 4107 to 4132, 4262 to 4297, 4321 to 4442, 4601 to 4631, 4753 to 4797, 4861 to 4882, 5003 to 5030, and 5372 to 5429; these read PKYK…NNNK, DIKN…NNKN, QQQQ…NVSS, SSNN…GTLS, QTNQ…EDQE, GLNN…NSST, LNRN…DDDD, QQQQ…RNKK, QQQQ…FKNN, ELEK…RPDE, NSSN…YNGR, SQSI…TSPG, TSSP…KKSL, NNNN…TQEF, NAGG…SISQ, LATK…DGIE, and NINN…IGQD. The span at 595–614 shows a compositional bias: basic and acidic residues; that stretch reads HQENKENKENQENQENENKN. Over residues 1395–1406 the composition is skewed to basic and acidic residues; sequence QQQKEEEQHGGE. A compositionally biased stretch (polar residues) spans 2747-2756; it reads QTNQNNQKNR. Residues 2774-2784 show a composition bias toward acidic residues; that stretch reads NDNDEYDEDQE. Positions 3388–3401 are enriched in acidic residues; sequence IDDDDGDGDDDDDD. Positions 4015–4024 are enriched in basic and acidic residues; sequence QEKEKEIEKE. A compositionally biased stretch (low complexity) spans 4031 to 4040; sequence LKNNNNISIN. Over residues 4041 to 4057 the composition is skewed to acidic residues; the sequence is DNDDDDDDDDNDNDENN. The span at 4058 to 4068 shows a compositional bias: low complexity; that stretch reads NENYEFNFKNN. Positions 4107–4120 are enriched in basic and acidic residues; that stretch reads ELEKKKRERKENSK. Composition is skewed to low complexity over residues 4330–4383 and 4399–4429; these read TTTT…VGSN and NNNN…NNNN. Residues 4430–4441 show a composition bias toward polar residues; that stretch reads SNDNQVNFSTSP. Low complexity-rich tracts occupy residues 4601 to 4617 and 4753 to 4784; these read TSSP…NYNN and NNNN…SNEN. Residues 4785–4794 are compositionally biased toward polar residues; the sequence is SQDQPPSIKT. Composition is skewed to low complexity over residues 5013-5030 and 5372-5384; these read DNSN…DGIE and NINN…NNDN. Positions 5385 to 5409 are enriched in basic and acidic residues; it reads NKNKNNNDKNKNNDKNNKNNNDKNN. The span at 5410 to 5421 shows a compositional bias: low complexity; the sequence is NDNNNNNNNNNN.

It belongs to the VPS13 family.

The protein localises to the membrane. Mediates the transfer of lipids between membranes at organelle contact sites. This is Intermembrane lipid transfer protein vps13B (vps13B) from Dictyostelium discoideum (Social amoeba).